Consider the following 376-residue polypeptide: Dihydroorotate dehydrogenase (quinone) (376 aa).

FMN-binding positions include 74–78 (AGFDK) and Thr98. Substrate is bound at residue Lys78. 123 to 127 (NHMGF) contacts substrate. Residues Asn152 and Asn185 each coordinate FMN. Asn185 lines the substrate pocket. The active-site Nucleophile is Ser188. Residue Asn190 coordinates substrate. FMN contacts are provided by Lys223 and Thr251. 252–253 (NT) contacts substrate. FMN is bound by residues Gly280, Gly309, and 330–331 (YT). Positions 352-376 (RNPAPSSPERMPTGIQSGRKIVMDP) are disordered.

The protein belongs to the dihydroorotate dehydrogenase family. Type 2 subfamily. As to quaternary structure, monomer. The cofactor is FMN.

It localises to the cell membrane. It carries out the reaction (S)-dihydroorotate + a quinone = orotate + a quinol. It participates in pyrimidine metabolism; UMP biosynthesis via de novo pathway; orotate from (S)-dihydroorotate (quinone route): step 1/1. Functionally, catalyzes the conversion of dihydroorotate to orotate with quinone as electron acceptor. This Synechococcus sp. (strain JA-3-3Ab) (Cyanobacteria bacterium Yellowstone A-Prime) protein is Dihydroorotate dehydrogenase (quinone).